Reading from the N-terminus, the 314-residue chain is Porphobilinogen deaminase (314 aa).

Residue Cys249 is modified to S-(dipyrrolylmethanemethyl)cysteine.

This sequence belongs to the HMBS family. As to quaternary structure, monomer. Requires dipyrromethane as cofactor.

It catalyses the reaction 4 porphobilinogen + H2O = hydroxymethylbilane + 4 NH4(+). It participates in porphyrin-containing compound metabolism; protoporphyrin-IX biosynthesis; coproporphyrinogen-III from 5-aminolevulinate: step 2/4. Its function is as follows. Tetrapolymerization of the monopyrrole PBG into the hydroxymethylbilane pre-uroporphyrinogen in several discrete steps. The protein is Porphobilinogen deaminase of Brucella anthropi (strain ATCC 49188 / DSM 6882 / CCUG 24695 / JCM 21032 / LMG 3331 / NBRC 15819 / NCTC 12168 / Alc 37) (Ochrobactrum anthropi).